The following is a 210-amino-acid chain: uncharacterized protein (210 aa).

A signal peptide spans Met1–Ala21.

This is an uncharacterized protein from Archaeoglobus fulgidus (strain ATCC 49558 / DSM 4304 / JCM 9628 / NBRC 100126 / VC-16).